Here is an 811-residue protein sequence, read N- to C-terminus: DEP domain-containing protein 1A (811 aa).

Residues 24 to 108 enclose the DEP domain; the sequence is FRAGMPLRKH…DNNQLFRFPA (85 aa). Residues 281-321 form the Rho-GAP domain; sequence DYFLDLPEPLLTFEYYELFVNILVVCGYITVSDRSSGIHKI. At Ser-512 the chain carries Phosphoserine. An interaction with ZNF224 region spans residues 598–653; that stretch reads AIDALQLCCLLLPPPNRRKLQLLMRMISRMSQNVDMPKLHDAMGTRSLMIHTFSRC.

In terms of assembly, isoform 2 and isoform 5 can form homodimers and heterodimers. Interacts with ZNF224. In terms of tissue distribution, expressed in testis. Up-regulated in bladder cancer cells (at protein level).

It localises to the nucleus. Functionally, may be involved in transcriptional regulation as a transcriptional corepressor. The DEPDC1A-ZNF224 complex may play a critical role in bladder carcinogenesis by repressing the transcription of the A20 gene, leading to transport of NF-KB protein into the nucleus, resulting in suppression of apoptosis of bladder cancer cells. In Homo sapiens (Human), this protein is DEP domain-containing protein 1A (DEPDC1).